Here is a 217-residue protein sequence, read N- to C-terminus: 3,4-dihydroxy-2-butanone 4-phosphate synthase (217 aa).

D-ribulose 5-phosphate is bound by residues Arg37–Glu38, Asp42, Arg150–Thr154, and Glu174. Glu38 serves as a coordination point for Mg(2+). A Mg(2+)-binding site is contributed by His153.

The protein belongs to the DHBP synthase family. In terms of assembly, homodimer. Requires Mg(2+) as cofactor. Mn(2+) serves as cofactor.

It catalyses the reaction D-ribulose 5-phosphate = (2S)-2-hydroxy-3-oxobutyl phosphate + formate + H(+). It participates in cofactor biosynthesis; riboflavin biosynthesis; 2-hydroxy-3-oxobutyl phosphate from D-ribulose 5-phosphate: step 1/1. Catalyzes the conversion of D-ribulose 5-phosphate to formate and 3,4-dihydroxy-2-butanone 4-phosphate. The polypeptide is 3,4-dihydroxy-2-butanone 4-phosphate synthase (Enterobacter sp. (strain 638)).